The sequence spans 1734 residues: MGQTVTTPLSLTLEHWEDVQRIASNQSVDVKKRRWVTFCSAEWPTFGVGWPQDGTFNLDIILQVKSKVFSPGPHGHPDQVPYIVTWEAIAYEPPPWVKPFVSPKLSPSPTAPILPSGPSTQPPPRSALYPALTPSIKPRPSKPQVLSDNGGPLIDLLSEDPPPYGGQGLSSSDGDGDREEATSTSEIPAPSPIVSRLRGKRDPPAADSTTSRAFPLRLGGNGQLQYWPFSSSDLYNWKNNNPSFSEDPGKLTALIESVLTTHQPTWDDCQQLLGTLLTGEEKQRVLLEARKAVRGNDGRPTQLPNEVDAAFPLERPDWDYTTQRGRNHLVLYRQLLLAGLQNAGRSPTNLAKVKGITQGPNESPSAFLERLKEAYRRYTPYDPEDPGQETNVSMSFIWQSAPDIGRKLERLEDLKSKTLGDLVREAERIFNKRETPEEREERVRRETEEKEERRRAEEEQKEKERDRRRHREMSKLLATVVSGQRQDRQGGERRRPQLDKDQCAYCKEKGHWAKDCPKKPRGPRGPRPQTSLLTLDDQGGQGQEPPPEPRITLTVGGQPVTFLVDTGAQHSVLTQNPGPLSDRSAWVQGATGGKRYRWTTDRKVHLATGKVTHSFLHVPDCPYPLLGRDLLTKLKAQIHFEGSGAQVVGPKGQPLQVLTLNLEDEYRLYETSAEPEVSPGSTWLSDFPQAWAETGGMGLAVRQAPLIIPLKATSTPVSIKQYPMSQEAKLGIKPHIQRLLDQGILVPCQSPWNTPLLPVKKPGTNDYRPVQDLREVNKRVEDIHPTVPNPYNLLSGLPPSHRWYTVLDLKDAFFCLRLHPTSQPLFAFEWRDPGMGISGQLTWTRLPQGFKNSPTLFDEALHRDLADFRIQHPDLILLQYVDDILLAATSELDCQQGTRALLLTLGNLGYRASAKKAQLCQKQVKYLGYLLKEGQRWLTEARKETVMGQPTPKTPRQLREFLGTAGFCRLWIPGFAEMAAPLYPLTKTGTLFNWGPDQQKAYQEIKQALLTAPALGLPDLTKPFELFVDEKQGYAKGVLTQKLGPWRRPVAYLSKKLDPVAAGWPPCLRMVAAIAVLRKDAGKLTMGQPLVILAPHAVEALVKQPPDRWLSNARMTHYQAMLLDTDRVQFGPVVALNPATLLPLPEEGAPHDCLEILAETHGTRPDLTDQPIPDADHTWYTDGSSFLQEGQRKAGAAVTTETEVIWARALPAGTSAQRAELIALTQALKMAEGKRLNVYTDSRYAFATAHIHGEIYRRRGLLTSEGREIKNKSEILALLKALFLPKRLSIIHCLGHQKGDSAEARGNRLADQAAREAAIKTPPDTSTLLIEDSTPYTPAYFHYTETDLKKLRELGATYNQSKGYWVFQGKPVMPDQFVFELLDSLHRLTHLGYQKMKALLDRGESPYYMLNRDKTLQYVADSCTVCAQVNASKAKIGAGVRVRGHRPGSHWEIDFTEVKPGLYGYKYLLVFVDTFSGWVEAFPTKRETARVVSKKLLEEIFPRFGMPQVLGSDNGPAFTSQVSQSVADLLGIDWKLHCAYRPQSSGQVERMNRTIKETLTKLTLAAGTRDWVLLLPLALYRARNTPGPHGLTPYEILYGAPPPLVNFHDPDMSELTNSPSLQAHLQALQTVQREIWKPLAEAYRDQLDQPVIPHPFRIGDSVWVRRHQTKNLEPRWKGPYTVLLTTPTALKVDGISAWIHAAHVKAATTPPIKPSWRVQRSQNPLKIRLTRGAP.

Glycine 2 carries N-myristoyl glycine; by host lipidation. The disordered stretch occupies residues 107–217 (PSPTAPILPS…STTSRAFPLR (111 aa)). The short motif at 109–112 (PTAP) is the PTAP/PSAP motif element. The short motif at 128–132 (LYPAL) is the LYPX(n)L motif element. The PPXY motif signature appears at 161 to 164 (PPPY). Phosphoserine; by host is present on serine 191. Positions 344–392 (GRSPTNLAKVKGITQGPNESPSAFLERLKEAYRRYTPYDPEDPGQETNV) are interaction with host PIAS4. Residues 429–434 (IFNKRE) form an interaction with host UBE2I region. Composition is skewed to basic and acidic residues over residues 434–465 (ETPE…EKER) and 485–498 (RQDR…RPQL). Disordered regions lie at residues 434 to 498 (ETPE…RPQL) and 512 to 552 (WAKD…PRIT). A coiled-coil region spans residues 437–478 (EEREERVRRETEEKEERRRAEEEQKEKERDRRRHREMSKLLA). The CCHC-type zinc finger occupies 501-518 (DQCAYCKEKGHWAKDCPK). Positions 560 to 630 (VTFLVDTGAQ…CPYPLLGRDL (71 aa)) constitute a Peptidase A2 domain. Aspartate 565 (protease; shared with dimeric partner) is an active-site residue. The 192-residue stretch at 740–931 (LDQGILVPCQ…KQVKYLGYLL (192 aa)) folds into the Reverse transcriptase domain. The Mg(2+) site is built by aspartate 808, aspartate 882, aspartate 883, aspartate 1182, glutamate 1220, aspartate 1241, and aspartate 1311. The region spanning 1173–1319 (PDADHTWYTD…ADQAAREAAI (147 aa)) is the RNase H type-1 domain. The HHCC-type zinc finger occupies 1386-1426 (HRLTHLGYQKMKALLDRGESPYYMLNRDKTLQYVADSCTVC). Residues 1443–1601 (RGHRPGSHWE…TPYEILYGAP (159 aa)) form the Integrase catalytic domain. Aspartate 1454 and aspartate 1513 together coordinate Mg(2+).

Belongs to the retroviral Pol polyprotein family. As to quaternary structure, homohexamer; further associates as homomultimer. The virus core is composed of a lattice formed from hexagonal rings, each containing six capsid monomers. Interacts (via PPXY motif) with host NEDD4. Interacts (via PSAP motif) with host TSG101. Interacts (via LYPX(n)L motif) with host PDCD6IP. In terms of assembly, the reverse transcriptase is a monomer (Potential). Interacts (via RNase domains) with host release factor ETF1; this interaction is essential for translational readthrough of amber codon between viral gag and pol genes, as well as for viral replication. As to quaternary structure, homodimer. It depends on Mg(2+) as a cofactor. Ubiquitinated by ITCH. Gag can recruit the ubiquitin ligase Itch in an L domain-independent manner to facilitate virus release via a mechanism that involves Gag ubiquitination. Post-translationally, specific enzymatic cleavages by the viral protease yield mature proteins. The protease is released by autocatalytic cleavage. The polyprotein is cleaved during and after budding, this process is termed maturation. In terms of processing, sumoylated; which is required for virus replication. Phosphorylated on serine residues.

The protein resides in the virion. It localises to the host cell membrane. The protein localises to the host late endosome membrane. Its subcellular location is the host endosome. It is found in the host multivesicular body. The protein resides in the host cytoplasm. The enzyme catalyses DNA(n) + a 2'-deoxyribonucleoside 5'-triphosphate = DNA(n+1) + diphosphate. The catalysed reaction is Endonucleolytic cleavage to 5'-phosphomonoester.. With respect to regulation, most efficiently inhibited by Amprenavir, which is able to block Gag-Pol processing in infected cells. Functionally, plays a role in budding and is processed by the viral protease during virion maturation outside the cell. During budding, it recruits, in a PPXY-dependent or independent manner, Nedd4-like ubiquitin ligases that conjugate ubiquitin molecules to Gag-Pol, or to Gag-Pol binding host factors. Interaction with HECT ubiquitin ligases probably link the viral protein to the host ESCRT pathway and facilitates release. In terms of biological role, targets Gag and gag-pol polyproteins to the plasma membrane via a multipartite membrane binding signal, that includes its myristoylated N-terminus. Also mediates nuclear localization of the pre-integration complex. Constituent of the pre-integration complex (PIC) which tethers the latter to mitotic chromosomes. This allows the integration of the viral genome into the host DNA. Its function is as follows. Forms the spherical core of the virion that encapsulates the genomic RNA-nucleocapsid complex. Functionally, involved in the packaging and encapsidation of two copies of the genome. Binds with high affinity to conserved UCUG elements within the packaging signal, located near the 5'-end of the genome. This binding is dependent on genome dimerization. Acts as a nucleic acid chaperone which is involved in rearrangement of nucleic acid secondary structures during gRNA retrotranscription. In terms of biological role, the aspartyl protease mediates proteolytic cleavages of Gag and Gag-Pol polyproteins during or shortly after the release of the virion from the plasma membrane. Cleavages take place as an ordered, step-wise cascade to yield mature proteins. This process is called maturation. Displays maximal activity during the budding process just prior to particle release from the cell (Potential). Cleaves the translation initiation factor eIF4G leading to the inhibition of host cap-dependent translation. RT is a multifunctional enzyme that converts the viral dimeric RNA genome into dsDNA in the cytoplasm, shortly after virus entry into the cell. This enzyme displays a DNA polymerase activity that can copy either DNA or RNA templates, and a ribonuclease H (RNase H) activity that cleaves the RNA strand of RNA-DNA heteroduplexes in a partially processive 3' to 5' endonucleasic mode. Conversion of viral genomic RNA into dsDNA requires many steps. A tRNA binds to the primer-binding site (PBS) situated at the 5' end of the viral RNA. RT uses the 3' end of the tRNA primer to perform a short round of RNA-dependent minus-strand DNA synthesis. The reading proceeds through the U5 region and ends after the repeated (R) region which is present at both ends of viral RNA. The portion of the RNA-DNA heteroduplex is digested by the RNase H, resulting in a ssDNA product attached to the tRNA primer. This ssDNA/tRNA hybridizes with the identical R region situated at the 3' end of viral RNA. This template exchange, known as minus-strand DNA strong stop transfer, can be either intra- or intermolecular. RT uses the 3' end of this newly synthesized short ssDNA to perform the RNA-dependent minus-strand DNA synthesis of the whole template. RNase H digests the RNA template except for a polypurine tract (PPT) situated at the 5' end of the genome. It is not clear if both polymerase and RNase H activities are simultaneous. RNase H probably can proceed both in a polymerase-dependent (RNA cut into small fragments by the same RT performing DNA synthesis) and a polymerase-independent mode (cleavage of remaining RNA fragments by free RTs). Secondly, RT performs DNA-directed plus-strand DNA synthesis using the PPT that has not been removed by RNase H as primers. PPT and tRNA primers are then removed by RNase H. The 3' and 5' ssDNA PBS regions hybridize to form a circular dsDNA intermediate. Strand displacement synthesis by RT to the PBS and PPT ends produces a blunt ended, linear dsDNA copy of the viral genome that includes long terminal repeats (LTRs) at both ends. Its function is as follows. Catalyzes viral DNA integration into the host chromosome, by performing a series of DNA cutting and joining reactions. This enzyme activity takes place after virion entry into a cell and reverse transcription of the RNA genome in dsDNA. The first step in the integration process is 3' processing. This step requires a complex comprising the viral genome, matrix protein and integrase. This complex is called the pre-integration complex (PIC). The integrase protein removes 2 nucleotides from each 3' end of the viral DNA, leaving recessed CA OH's at the 3' ends. In the second step that requires cell division, the PIC enters cell nucleus. In the third step, termed strand transfer, the integrase protein joins the previously processed 3' ends to the 5' ends of strands of target cellular DNA at the site of integration. The last step is viral DNA integration into host chromosome. The protein is Gag-Pol polyprotein (pol) of AKV murine leukemia virus (AKR (endogenous) murine leukemia virus).